The sequence spans 332 residues: tRNA dimethylallyltransferase (332 aa).

14-21 (GPTASGKT) is a binding site for ATP. Position 16–21 (16–21 (TASGKT)) interacts with substrate. The tract at residues 39–42 (DSMQ) is interaction with substrate tRNA. A disordered region spans residues 313–332 (KRSSKHDCKPQHPRSSTREL). A compositionally biased stretch (basic and acidic residues) spans 317–332 (KHDCKPQHPRSSTREL).

Belongs to the IPP transferase family. As to quaternary structure, monomer. Mg(2+) is required as a cofactor.

The catalysed reaction is adenosine(37) in tRNA + dimethylallyl diphosphate = N(6)-dimethylallyladenosine(37) in tRNA + diphosphate. Catalyzes the transfer of a dimethylallyl group onto the adenine at position 37 in tRNAs that read codons beginning with uridine, leading to the formation of N6-(dimethylallyl)adenosine (i(6)A). The polypeptide is tRNA dimethylallyltransferase (Staphylococcus haemolyticus (strain JCSC1435)).